A 62-amino-acid chain; its full sequence is Large ribosomal subunit protein uL30 (62 aa).

This sequence belongs to the universal ribosomal protein uL30 family. In terms of assembly, part of the 50S ribosomal subunit.

The chain is Large ribosomal subunit protein uL30 from Roseobacter denitrificans (strain ATCC 33942 / OCh 114) (Erythrobacter sp. (strain OCh 114)).